We begin with the raw amino-acid sequence, 410 residues long: Multifunctional CCA protein (410 aa).

ATP-binding residues include Gly8 and Arg11. CTP is bound by residues Gly8 and Arg11. Mg(2+)-binding residues include Glu21 and Asp23. ATP contacts are provided by Arg91, Arg137, and Arg140. Positions 91, 137, and 140 each coordinate CTP. Residues Thr228 to Leu329 form the HD domain.

Belongs to the tRNA nucleotidyltransferase/poly(A) polymerase family. Bacterial CCA-adding enzyme type 1 subfamily. In terms of assembly, monomer. Can also form homodimers and oligomers. Requires Mg(2+) as cofactor. Ni(2+) serves as cofactor.

The catalysed reaction is a tRNA precursor + 2 CTP + ATP = a tRNA with a 3' CCA end + 3 diphosphate. It catalyses the reaction a tRNA with a 3' CCA end + 2 CTP + ATP = a tRNA with a 3' CCACCA end + 3 diphosphate. Its function is as follows. Catalyzes the addition and repair of the essential 3'-terminal CCA sequence in tRNAs without using a nucleic acid template. Adds these three nucleotides in the order of C, C, and A to the tRNA nucleotide-73, using CTP and ATP as substrates and producing inorganic pyrophosphate. tRNA 3'-terminal CCA addition is required both for tRNA processing and repair. Also involved in tRNA surveillance by mediating tandem CCA addition to generate a CCACCA at the 3' terminus of unstable tRNAs. While stable tRNAs receive only 3'-terminal CCA, unstable tRNAs are marked with CCACCA and rapidly degraded. This is Multifunctional CCA protein from Alcanivorax borkumensis (strain ATCC 700651 / DSM 11573 / NCIMB 13689 / SK2).